Here is a 245-residue protein sequence, read N- to C-terminus: Large ribosomal subunit protein uL3 (245 aa).

Q151 is modified (N5-methylglutamine). The disordered stretch occupies residues 214–245 (KDAPQPGKYRLANSAAPQPAEADAASDTGAQA). Residues 225–245 (ANSAAPQPAEADAASDTGAQA) show a composition bias toward low complexity.

The protein belongs to the universal ribosomal protein uL3 family. As to quaternary structure, part of the 50S ribosomal subunit. Forms a cluster with proteins L14 and L19. Post-translationally, methylated by PrmB.

Its function is as follows. One of the primary rRNA binding proteins, it binds directly near the 3'-end of the 23S rRNA, where it nucleates assembly of the 50S subunit. This chain is Large ribosomal subunit protein uL3, found in Methylocella silvestris (strain DSM 15510 / CIP 108128 / LMG 27833 / NCIMB 13906 / BL2).